A 457-amino-acid polypeptide reads, in one-letter code: MHRYKKEASNLIKLATPVLIASVAQTGMGFVDTIMAGGVSAIDMAAVSIAASIWLPSILFGVGLLMALVPVVAQLNGAGRQHKIPFEVHQGLILALLVSVPIIAVLFQTQFIIRFMDVEEAMATKTVGYMHAVIFAVPAYLLFQALRSFTDGMSLTKPAMVIGFIGLLLNIPLNWIFVYGKFGAPELGGVGCGVATAIVYWIMLLLLLFYIVTSKRLAHVKVFETFHKPQPKELIRLFRLGFPVAAALFFEVTLFAVVALLVAPLGSTVVAAHQVALNFSSLVFMFPMSIGAAVSIRVGHKLGEQDTKGAAIAANVGLMTGLATACITALLTVLFREQIALLYTENQVVVALAMQLLLFAAIYQCMDAVQVVAAGSLRGYKDMTAIFHRTFISYWVLGLPTGYILGMTNWLTEQPLGAKGFWLGFIIGLSAAALMLGQRLYWLQKQSDDVQLHLAAK.

12 helical membrane passes run 30-50 (FVDT…VSIA), 53-73 (IWLP…PVVA), 93-113 (ILAL…QFII), 126-146 (TVGY…FQAL), 159-179 (AMVI…IFVY), 192-212 (CGVA…FYIV), 242-262 (FPVA…ALLV), 276-296 (ALNF…AVSI), 315-335 (NVGL…TVLF), 348-368 (VVVA…CMDA), 391-411 (FISY…TNWL), and 416-436 (LGAK…ALML).

This sequence belongs to the multi antimicrobial extrusion (MATE) (TC 2.A.66.1) family.

It localises to the cell inner membrane. In terms of biological role, multidrug efflux pump that functions as a Na(+)/drug antiporter. Confers resistance to norfloxacin, ciprofloxacin, ofloxacin, daunomycin, doxorubicin, streptomycin, kanamycin, ethidium bromide and acriflavine. This is Multidrug resistance protein NorM (norM) from Vibrio cholerae serotype O1 (strain ATCC 39315 / El Tor Inaba N16961).